The primary structure comprises 259 residues: Probable ABC transporter permease protein RT0041 (259 aa).

Helical transmembrane passes span 20-40, 49-69, 148-168, 195-215, and 237-257; these read VGIF…PPLY, LFIG…SGAV, VIAA…IGVM, LIDV…ISII, and AVVN…ELLF.

It belongs to the MlaE permease family.

It localises to the cell inner membrane. Its function is as follows. Could be part of an ABC transporter complex. The protein is Probable ABC transporter permease protein RT0041 of Rickettsia typhi (strain ATCC VR-144 / Wilmington).